We begin with the raw amino-acid sequence, 576 residues long: 2-succinyl-5-enolpyruvyl-6-hydroxy-3-cyclohexene-1-carboxylate synthase (576 aa).

It belongs to the TPP enzyme family. MenD subfamily. In terms of assembly, homodimer. It depends on Mg(2+) as a cofactor. Mn(2+) is required as a cofactor. Thiamine diphosphate serves as cofactor.

It carries out the reaction isochorismate + 2-oxoglutarate + H(+) = 5-enolpyruvoyl-6-hydroxy-2-succinyl-cyclohex-3-ene-1-carboxylate + CO2. It participates in quinol/quinone metabolism; 1,4-dihydroxy-2-naphthoate biosynthesis; 1,4-dihydroxy-2-naphthoate from chorismate: step 2/7. It functions in the pathway quinol/quinone metabolism; menaquinone biosynthesis. Its function is as follows. Catalyzes the thiamine diphosphate-dependent decarboxylation of 2-oxoglutarate and the subsequent addition of the resulting succinic semialdehyde-thiamine pyrophosphate anion to isochorismate to yield 2-succinyl-5-enolpyruvyl-6-hydroxy-3-cyclohexene-1-carboxylate (SEPHCHC). This Aliivibrio fischeri (strain ATCC 700601 / ES114) (Vibrio fischeri) protein is 2-succinyl-5-enolpyruvyl-6-hydroxy-3-cyclohexene-1-carboxylate synthase.